The primary structure comprises 298 residues: ATP synthase gamma chain (298 aa).

It belongs to the ATPase gamma chain family. As to quaternary structure, F-type ATPases have 2 components, CF(1) - the catalytic core - and CF(0) - the membrane proton channel. CF(1) has five subunits: alpha(3), beta(3), gamma(1), delta(1), epsilon(1). CF(0) has three main subunits: a, b and c.

The protein resides in the cell inner membrane. Its function is as follows. Produces ATP from ADP in the presence of a proton gradient across the membrane. The gamma chain is believed to be important in regulating ATPase activity and the flow of protons through the CF(0) complex. The chain is ATP synthase gamma chain from Desulfosudis oleivorans (strain DSM 6200 / JCM 39069 / Hxd3) (Desulfococcus oleovorans).